A 132-amino-acid chain; its full sequence is uncharacterized protein (132 aa).

The disordered stretch occupies residues 39–93 (HPAGASEALGALPPPRQLVEKRRVSPPRRLDQSGRDGGAVAKCSLSRGLSPPGWT). Over residues 56–72 (LVEKRRVSPPRRLDQSG) the composition is skewed to basic and acidic residues.

This is an uncharacterized protein from Homo sapiens (Human).